Consider the following 211-residue polypeptide: Orotate phosphoribosyltransferase (211 aa).

Lys26 provides a ligand contact to 5-phospho-alpha-D-ribose 1-diphosphate. 34 to 35 (FF) contacts orotate. 5-phospho-alpha-D-ribose 1-diphosphate contacts are provided by residues 72 to 73 (YK), Arg98, Lys99, Lys102, His104, and 123 to 131 (DDVITAGTA). 2 residues coordinate orotate: Thr127 and Arg155.

Belongs to the purine/pyrimidine phosphoribosyltransferase family. PyrE subfamily. In terms of assembly, homodimer. The cofactor is Mg(2+).

The catalysed reaction is orotidine 5'-phosphate + diphosphate = orotate + 5-phospho-alpha-D-ribose 1-diphosphate. It participates in pyrimidine metabolism; UMP biosynthesis via de novo pathway; UMP from orotate: step 1/2. Its function is as follows. Catalyzes the transfer of a ribosyl phosphate group from 5-phosphoribose 1-diphosphate to orotate, leading to the formation of orotidine monophosphate (OMP). This chain is Orotate phosphoribosyltransferase, found in Legionella pneumophila (strain Lens).